A 189-amino-acid polypeptide reads, in one-letter code: HGPRTase-like protein 2 (189 aa).

The protein belongs to the purine/pyrimidine phosphoribosyltransferase family. Archaeal HPRT subfamily.

Its function is as follows. May catalyze a purine salvage reaction, the substrate is unknown. The chain is HGPRTase-like protein 2 from Halalkalicoccus jeotgali (strain DSM 18796 / CECT 7217 / JCM 14584 / KCTC 4019 / B3).